The primary structure comprises 876 residues: Leucine--tRNA ligase (876 aa).

The short motif at 42 to 52 (PYPSGKLHMGH) is the 'HIGH' region element. The 'KMSKS' region motif lies at 634-638 (KMGKS). Position 637 (lysine 637) interacts with ATP.

The protein belongs to the class-I aminoacyl-tRNA synthetase family.

Its subcellular location is the cytoplasm. It catalyses the reaction tRNA(Leu) + L-leucine + ATP = L-leucyl-tRNA(Leu) + AMP + diphosphate. The chain is Leucine--tRNA ligase from Variovorax paradoxus (strain S110).